The following is a 383-amino-acid chain: uncharacterized protein (383 aa).

The protein belongs to the peptidase M20 family.

This is an uncharacterized protein from Staphylococcus epidermidis (strain ATCC 35984 / DSM 28319 / BCRC 17069 / CCUG 31568 / BM 3577 / RP62A).